We begin with the raw amino-acid sequence, 323 residues long: o-succinylbenzoate synthase (323 aa).

K134 acts as the Proton donor in catalysis. Mg(2+) is bound by residues D162, E191, and D214. The Proton acceptor role is filled by K236.

This sequence belongs to the mandelate racemase/muconate lactonizing enzyme family. MenC type 1 subfamily. A divalent metal cation serves as cofactor.

It carries out the reaction (1R,6R)-6-hydroxy-2-succinyl-cyclohexa-2,4-diene-1-carboxylate = 2-succinylbenzoate + H2O. The protein operates within quinol/quinone metabolism; 1,4-dihydroxy-2-naphthoate biosynthesis; 1,4-dihydroxy-2-naphthoate from chorismate: step 4/7. It functions in the pathway quinol/quinone metabolism; menaquinone biosynthesis. In terms of biological role, converts 2-succinyl-6-hydroxy-2,4-cyclohexadiene-1-carboxylate (SHCHC) to 2-succinylbenzoate (OSB). The polypeptide is o-succinylbenzoate synthase (Yersinia pseudotuberculosis serotype O:3 (strain YPIII)).